The chain runs to 248 residues: Prepilin leader peptidase/N-methyltransferase (248 aa).

The chain crosses the membrane as a helical span at residues 1-21 (MLSILFIFGLILGSFYYTAGC). 4 residues coordinate Zn(2+): Cys-36, Cys-39, Cys-61, and Cys-64. 6 helical membrane-spanning segments follow: residues 68 to 88 (ISFMYPAAELVTACLFAAAGI), 90 to 110 (FGISLELFPAVVFISLLIIVA), 114 to 134 (IHFMLIPNRILIFFLPFLAAA), 143 to 163 (WYAGLLGAAAGFLFLAVIAAI), 178 to 198 (VIGFVLGVKMLAAAFFFSVLI), and 223 to 243 (AIAAGSILAYLYGDSIISFYI).

This sequence belongs to the peptidase A24 family. Requires Zn(2+) as cofactor.

The protein resides in the cell membrane. It catalyses the reaction Typically cleaves a -Gly-|-Phe- bond to release an N-terminal, basic peptide of 5-8 residues from type IV prepilin, and then N-methylates the new N-terminal amino group, the methyl donor being S-adenosyl-L-methionine.. Its function is as follows. Plays a role in type II pseudopili formation by proteolytically removing the leader sequence from substrate proteins and subsequently monomethylating the alpha-amino group of the newly exposed N-terminal phenylalanine. Substrates include proteins required for biogenesis of the type II general secretory apparatus. The polypeptide is Prepilin leader peptidase/N-methyltransferase (comC) (Bacillus subtilis (strain 168)).